The following is a 508-amino-acid chain: DNA-directed RNA polymerase subunit alpha (508 aa).

Residues 1–380 (MKHILLSCVE…HLFSPFLQTH (380 aa)) are alpha N-terminal domain (alpha-NTD). Residues 434–508 (NLVTAIQTLD…LKNFGVLPTS (75 aa)) are alpha C-terminal domain (alpha-CTD).

Belongs to the RNA polymerase alpha chain family. As to quaternary structure, in plastids the minimal PEP RNA polymerase catalytic core is composed of four subunits: alpha, beta, beta', and beta''. When a (nuclear-encoded) sigma factor is associated with the core the holoenzyme is formed, which can initiate transcription.

Its subcellular location is the plastid. It localises to the chloroplast. It carries out the reaction RNA(n) + a ribonucleoside 5'-triphosphate = RNA(n+1) + diphosphate. DNA-dependent RNA polymerase catalyzes the transcription of DNA into RNA using the four ribonucleoside triphosphates as substrates. The protein is DNA-directed RNA polymerase subunit alpha (rpoA) of Oltmannsiellopsis viridis (Marine flagellate).